A 416-amino-acid chain; its full sequence is Homeobox protein ceh-62 (416 aa).

A compositionally biased stretch (low complexity) spans 103–113 (TPTPIIATPSI). Disordered regions lie at residues 103–144 (TPTP…QATR) and 178–247 (FQNR…FPPT). Residues 118–127 (QPLQSPSAPN) are compositionally biased toward polar residues. Positions 130–189 (SRRKRTTFSPEQATRLEAEYIGDSYMAREKRHLLAQSLKLSENQVKTWFQNRRAKDKRDR) form a DNA-binding region, homeobox. Low complexity predominate over residues 193–218 (NASNHTSNSRRSSPSRKSSSDSTPTP). Over residues 219-240 (TQATQFDMPTQIQTASPPTTAD) the composition is skewed to polar residues.

The protein resides in the nucleus. In Caenorhabditis elegans, this protein is Homeobox protein ceh-62.